The chain runs to 521 residues: Importin subunit alpha-4 (521 aa).

Residues 1–29 (MAENPGLENHRIKSFKNKGRDVETMRRHR) are disordered. N-acetylalanine is present on Ala-2. The IBB domain occupies 2-58 (AENPGLENHRIKSFKNKGRDVETMRRHRNEVTVELRKNKRDEHLLKKRNVPQEESLE). Basic and acidic residues predominate over residues 18-29 (KGRDVETMRRHR). The Nuclear localization signal signature appears at 43–52 (EHLLKKRNVP). Phosphoserine is present on residues Ser-56 and Ser-60. Residues 66 to 106 (FKAQNVTLEAILQNATSDNPVVQLSAVQAARKLLSSDRNPP) form an ARM 1; truncated repeat. ARM repeat units follow at residues 107 to 149 (IDDL…TSAQ), 150 to 194 (TQAV…CRDY), 195 to 233 (VISL…NKDP), 234 to 278 (PPPM…EQIQ), 279 to 318 (MVID…TDEQ), 319 to 360 (TQVV…NQQQ), 361 to 400 (VQAV…ISGR), and 401 to 443 (KDQV…IMAG). The segment at 137–229 (WALTNIASGT…VTWVIVNLCR (93 aa)) is NLS binding site (major). Residues 306 to 394 (RAVGNIVTGT…QKEAAWAISN (89 aa)) are NLS binding site (minor). The ARM 10; atypical repeat unit spans residues 447–485 (STIAEIIEECGGLEKIEVLQQHENEDIYKLAFEIIDQYF). At Tyr-484 the chain carries Phosphotyrosine.

It belongs to the importin alpha family. As to quaternary structure, forms a complex with importin subunit beta-1. Interacts with DDX21. Interacts with NCBP1, NCBP2/CBP20 and NCBP3. Interacts with RCC1. Interacts with ZC3H11A. In terms of tissue distribution, detected more or less in all tissues examined (Ehrlich ascites tumor cells, testis, kidney, spleen, liver, heart, lung, thymus, skeletal muscle, cerebellum and brain (without cerebellum)).

The protein localises to the cytoplasm. The protein resides in the nucleus. In terms of biological role, functions in nuclear protein import as an adapter protein for nuclear receptor KPNB1. Binds specifically and directly to substrates containing either a simple or bipartite NLS motif. Docking of the importin/substrate complex to the nuclear pore complex (NPC) is mediated by KPNB1 through binding to nucleoporin FxFG repeats and the complex is subsequently translocated through the pore by an energy requiring, Ran-dependent mechanism. At the nucleoplasmic side of the NPC, Ran binds to importin-beta and the three components separate and importin-alpha and -beta are re-exported from the nucleus to the cytoplasm where GTP hydrolysis releases Ran from importin. The directionality of nuclear import is thought to be conferred by an asymmetric distribution of the GTP- and GDP-bound forms of Ran between the cytoplasm and nucleus. In vitro, mediates the nuclear import of human cytomegalovirus UL84 by recognizing a non-classical NLS. The chain is Importin subunit alpha-4 (Kpna3) from Mus musculus (Mouse).